A 252-amino-acid polypeptide reads, in one-letter code: uncharacterized protein (252 aa).

This sequence belongs to the methyltransferase superfamily.

This is an uncharacterized protein from Mycobacterium sp. (strain KMS).